Consider the following 216-residue polypeptide: Large ribosomal subunit protein uL3 (216 aa).

Glutamine 153 bears the N5-methylglutamine mark.

Belongs to the universal ribosomal protein uL3 family. Part of the 50S ribosomal subunit. Forms a cluster with proteins L14 and L19. In terms of processing, methylated by PrmB.

Functionally, one of the primary rRNA binding proteins, it binds directly near the 3'-end of the 23S rRNA, where it nucleates assembly of the 50S subunit. The chain is Large ribosomal subunit protein uL3 from Burkholderia multivorans (strain ATCC 17616 / 249).